The following is a 210-amino-acid chain: Cell division protein SepF (210 aa).

The interval 13–101 (GLADGDEYDE…EPVDPGYRAP (89 aa)) is disordered. Composition is skewed to basic and acidic residues over residues 22–70 (EQPR…ERPE) and 83–93 (VEPRRPARPEP).

The protein belongs to the SepF family. Homodimer. Interacts with FtsZ.

It localises to the cytoplasm. In terms of biological role, cell division protein that is part of the divisome complex and is recruited early to the Z-ring. Probably stimulates Z-ring formation, perhaps through the cross-linking of FtsZ protofilaments. Its function overlaps with FtsA. This Micrococcus luteus (strain ATCC 4698 / DSM 20030 / JCM 1464 / CCM 169 / CCUG 5858 / IAM 1056 / NBRC 3333 / NCIMB 9278 / NCTC 2665 / VKM Ac-2230) (Micrococcus lysodeikticus) protein is Cell division protein SepF.